The sequence spans 125 residues: Fluoride-specific ion channel FluC (125 aa).

The next 4 helical transmembrane spans lie at 4 to 24 (VIYV…VGIV), 32 to 52 (FLPW…GLFA), 68 to 88 (LLIT…LDTV), and 100 to 120 (AFYV…GLAV). Na(+) is bound by residues Gly-75 and Thr-78.

The protein belongs to the fluoride channel Fluc/FEX (TC 1.A.43) family.

It is found in the cell inner membrane. It carries out the reaction fluoride(in) = fluoride(out). With respect to regulation, na(+) is not transported, but it plays an essential structural role and its presence is essential for fluoride channel function. Its function is as follows. Fluoride-specific ion channel. Important for reducing fluoride concentration in the cell, thus reducing its toxicity. In Allorhizobium ampelinum (strain ATCC BAA-846 / DSM 112012 / S4) (Agrobacterium vitis (strain S4)), this protein is Fluoride-specific ion channel FluC.